The chain runs to 426 residues: 3-phosphoshikimate 1-carboxyvinyltransferase (426 aa).

3 residues coordinate 3-phosphoshikimate: Lys-22, Ser-23, and Arg-27. Lys-22 contributes to the phosphoenolpyruvate binding site. Phosphoenolpyruvate-binding residues include Gly-96 and Arg-124. The 3-phosphoshikimate site is built by Ser-170, Ser-171, Gln-172, Ser-198, Asp-314, Asn-337, and Lys-341. Gln-172 lines the phosphoenolpyruvate pocket. The active-site Proton acceptor is Asp-314. Phosphoenolpyruvate is bound by residues Arg-345, Arg-387, and Lys-412.

It belongs to the EPSP synthase family. Monomer.

It localises to the cytoplasm. It catalyses the reaction 3-phosphoshikimate + phosphoenolpyruvate = 5-O-(1-carboxyvinyl)-3-phosphoshikimate + phosphate. The protein operates within metabolic intermediate biosynthesis; chorismate biosynthesis; chorismate from D-erythrose 4-phosphate and phosphoenolpyruvate: step 6/7. Its function is as follows. Catalyzes the transfer of the enolpyruvyl moiety of phosphoenolpyruvate (PEP) to the 5-hydroxyl of shikimate-3-phosphate (S3P) to produce enolpyruvyl shikimate-3-phosphate and inorganic phosphate. This is 3-phosphoshikimate 1-carboxyvinyltransferase from Aliivibrio fischeri (strain ATCC 700601 / ES114) (Vibrio fischeri).